The primary structure comprises 448 residues: U1 small nuclear ribonucleoprotein 70 kDa (448 aa).

The tract at residues 91–201 (TEIKNATEDP…GGGLGGTRRG (111 aa)) is required for interaction with U1 RNA. Residues 102-180 (RTLFIARINY…KRVLVDVERA (79 aa)) form the RRM domain. The interval 188–448 (PRRLGGGLGG…SSGDPSWWRQ (261 aa)) is disordered. Over residues 191–200 (LGGGLGGTRR) the composition is skewed to gly residues. 2 stretches are compositionally biased toward basic and acidic residues: residues 206–234 (NIKH…REGP) and 262–272 (ERRDRERDRGR). Residues 281-293 (SRSRSRERRKRRA) show a composition bias toward basic residues. Composition is skewed to basic and acidic residues over residues 294-320 (GSRE…DRER) and 346-376 (RDRE…IKEE). The interval 405–425 (RPPPAHHNMFSVPPPPILGRG) is mediates binding to Psi. Polar residues predominate over residues 426–448 (NASTNPNPDNGQQSSGDPSWWRQ).

Component of the U1 snRNP. Interacts with Psi; essential for alternative splicing of P-element transposase. Interacts with the SMN complex.

It is found in the nucleus speckle. It localises to the nucleus. The protein localises to the nucleoplasm. In terms of biological role, mediates the splicing of pre-mRNA by binding to the stem loop I region of U1-snRNA. Required during oogenesis for nurse cell chromatin dispersal. In Drosophila melanogaster (Fruit fly), this protein is U1 small nuclear ribonucleoprotein 70 kDa (snRNP-U1-70K).